Consider the following 371-residue polypeptide: Lysine racemase (371 aa).

Lys39 (proton acceptor) is an active-site residue. Lys39 is modified (N6-(pyridoxal phosphate)lysine). Arg135 provides a ligand contact to substrate. The active-site Proton acceptor is the Tyr266. Substrate is bound at residue Met313.

The protein belongs to the alanine racemase family. In terms of assembly, homodimer. It depends on pyridoxal 5'-phosphate as a cofactor.

It carries out the reaction L-lysine = D-lysine. In terms of biological role, catalyzes the interconversion of D-lysine and L-lysine. Can also use arginine and ornithine, but not alanine. In Oenococcus oeni (strain ATCC BAA-331 / PSU-1), this protein is Lysine racemase.